The following is a 153-amino-acid chain: UPF0756 membrane protein LSEI_1366 (153 aa).

4 helical membrane passes run 4–24 (WLFL…SLII), 52–72 (WGVT…EIGF), 85–105 (WIAI…VGLL), and 115–135 (LVFG…GPVI).

It belongs to the UPF0756 family.

The protein resides in the cell membrane. In Lacticaseibacillus paracasei (strain ATCC 334 / BCRC 17002 / CCUG 31169 / CIP 107868 / KCTC 3260 / NRRL B-441) (Lactobacillus paracasei), this protein is UPF0756 membrane protein LSEI_1366.